We begin with the raw amino-acid sequence, 166 residues long: Ferric nitrobindin-like protein (166 aa).

Positions glycine 21–glycine 27 match the GXWXGXG motif.

Belongs to the nitrobindin family.

The sequence is that of Ferric nitrobindin-like protein from Cutibacterium acnes (strain DSM 16379 / KPA171202) (Propionibacterium acnes).